We begin with the raw amino-acid sequence, 708 residues long: METLVGGLLTGEDSLISMSNDVSCLYVYDGPMRVFSQNALMPTLQSVKRSDQFSKGKTKRFIIDLFGMKRMWDIGNKQLEDENLDETVGVADLGLVKYLINNKYDEAEKTSLRKSMEEAFEKSMNEEFVVLNKGKSANDIISDTNAMCKFCVKNWIVATGFRGRTMSDLIEHHFRCMQGKQEVKGYIWKHKYNERLKRKQLSKEEVKFDREEYTSRSFRLLSFLKNSERTKLEPRAVFTAGVPWRAFIFVLEQTMLVVNKLDPNSVIWMGSDAKINTTNSRIKEIGMKNQGQTLVTLTGDNSKYNESMCPEVMMVFLRELGIKGPMLEVLDYALWQFSQKSVKPVAPIKKRTGKSTVVIKADSVKECRDAFNEKELELIQGVEWMDDGFVRVRRGMLMGMANNAFTTASTIASSFSFTPEAVYTLQSSDDFVTGSCGRDVQHARQRLEMALKVSKAAGLNVSQKKSFYVEGTTFEFNSMFVRDGKVMANGGNFENMTVPGGLGPSTDLFVVGKQARNSMLRGNLSFSQAMEMCKIGITNVEKVYYGNRKYQELKNEIREKCGEETMSIPESMGGDRKPRPWELPQSFDGIALKEAVNRGHWKAAKYIKSCCSIEFDEEGDQSWDTSKTALVVIRKNETDMRRRTVKTRNPKDKIFNDAMNKAKRMYETVVDRNPLLGLKGKGGRLTVKDLKARKLIDEVEVVKKKKHV.

One can recognise a RdRp catalytic domain in the interval 281–467 (RIKEIGMKNQ…GLNVSQKKSF (187 aa)).

The RNA polymerase is composed of three subunits: PB1, PB2 and PA.

It carries out the reaction RNA(n) + a ribonucleoside 5'-triphosphate = RNA(n+1) + diphosphate. RNA-dependent RNA polymerase which is responsible for replication and transcription of virus segments. Binds the promoter sequence of the encapsidated viral RNA. Displays an endonuclease activity involved in cap-stealing. Cleaves cellular pre-mRNA to generate primers for viral transcription. The sequence is that of RNA-directed RNA polymerase catalytic subunit from Infectious salmon anemia virus (isolate Atlantic salmon/Norway/810/9/99) (ISAV).